Consider the following 230-residue polypeptide: Cytidylate kinase (230 aa).

13–21 is an ATP binding site; that stretch reads GPAGTGKSS.

Belongs to the cytidylate kinase family. Type 1 subfamily.

It is found in the cytoplasm. It catalyses the reaction CMP + ATP = CDP + ADP. It carries out the reaction dCMP + ATP = dCDP + ADP. The polypeptide is Cytidylate kinase (Mycobacterium tuberculosis (strain ATCC 25177 / H37Ra)).